The following is a 178-amino-acid chain: Crossover junction endodeoxyribonuclease RuvC (178 aa).

Catalysis depends on residues Asp7, Glu67, and Asp139. Mg(2+) is bound by residues Asp7, Glu67, and Asp139.

The protein belongs to the RuvC family. In terms of assembly, homodimer which binds Holliday junction (HJ) DNA. The HJ becomes 2-fold symmetrical on binding to RuvC with unstacked arms; it has a different conformation from HJ DNA in complex with RuvA. In the full resolvosome a probable DNA-RuvA(4)-RuvB(12)-RuvC(2) complex forms which resolves the HJ. It depends on Mg(2+) as a cofactor.

The protein localises to the cytoplasm. It catalyses the reaction Endonucleolytic cleavage at a junction such as a reciprocal single-stranded crossover between two homologous DNA duplexes (Holliday junction).. In terms of biological role, the RuvA-RuvB-RuvC complex processes Holliday junction (HJ) DNA during genetic recombination and DNA repair. Endonuclease that resolves HJ intermediates. Cleaves cruciform DNA by making single-stranded nicks across the HJ at symmetrical positions within the homologous arms, yielding a 5'-phosphate and a 3'-hydroxyl group; requires a central core of homology in the junction. The consensus cleavage sequence is 5'-(A/T)TT(C/G)-3'. Cleavage occurs on the 3'-side of the TT dinucleotide at the point of strand exchange. HJ branch migration catalyzed by RuvA-RuvB allows RuvC to scan DNA until it finds its consensus sequence, where it cleaves and resolves the cruciform DNA. The protein is Crossover junction endodeoxyribonuclease RuvC of Trichlorobacter lovleyi (strain ATCC BAA-1151 / DSM 17278 / SZ) (Geobacter lovleyi).